Reading from the N-terminus, the 332-residue chain is 5-formaminoimidazole-4-carboxamide-1-(beta)-D-ribofuranosyl 5'-monophosphate synthetase (332 aa).

Residues H9 and S72 each contribute to the 5-amino-1-(5-phospho-beta-D-ribosyl)imidazole-4-carboxamide site. In terms of domain architecture, ATP-grasp spans 93-323 (RNLFPWESNQ…IGREINLAIQ (231 aa)). ATP-binding positions include 123–183 (PEDV…IPMY) and E205. N229 is a binding site for 5-amino-1-(5-phospho-beta-D-ribosyl)imidazole-4-carboxamide. 2 residues coordinate Mg(2+): E268 and E281.

Belongs to the phosphohexose mutase family. Requires Mg(2+) as cofactor. Mn(2+) serves as cofactor.

The enzyme catalyses 5-amino-1-(5-phospho-beta-D-ribosyl)imidazole-4-carboxamide + formate + ATP = 5-formamido-1-(5-phospho-D-ribosyl)imidazole-4-carboxamide + ADP + phosphate. It participates in purine metabolism; IMP biosynthesis via de novo pathway; 5-formamido-1-(5-phospho-D-ribosyl)imidazole-4-carboxamide from 5-amino-1-(5-phospho-D-ribosyl)imidazole-4-carboxamide (formate route): step 1/1. Functionally, catalyzes the ATP- and formate-dependent formylation of 5-aminoimidazole-4-carboxamide-1-beta-d-ribofuranosyl 5'-monophosphate (AICAR) to 5-formaminoimidazole-4-carboxamide-1-beta-d-ribofuranosyl 5'-monophosphate (FAICAR) in the absence of folates. The sequence is that of 5-formaminoimidazole-4-carboxamide-1-(beta)-D-ribofuranosyl 5'-monophosphate synthetase from Metallosphaera sedula (strain ATCC 51363 / DSM 5348 / JCM 9185 / NBRC 15509 / TH2).